The sequence spans 390 residues: Succinate--CoA ligase [ADP-forming] subunit beta (390 aa).

In terms of domain architecture, ATP-grasp spans 9-245 (KHLLKKYNIP…TTQEDEHETM (237 aa)). ATP contacts are provided by residues Lys-46, 53-55 (GRG), Glu-99, Ser-102, and Glu-107. Mg(2+) is bound by residues Asn-200 and Asp-214. Substrate-binding positions include Asn-265 and 322 to 324 (GIV).

This sequence belongs to the succinate/malate CoA ligase beta subunit family. In terms of assembly, heterotetramer of two alpha and two beta subunits. Mg(2+) is required as a cofactor.

The catalysed reaction is succinate + ATP + CoA = succinyl-CoA + ADP + phosphate. The enzyme catalyses GTP + succinate + CoA = succinyl-CoA + GDP + phosphate. It participates in carbohydrate metabolism; tricarboxylic acid cycle; succinate from succinyl-CoA (ligase route): step 1/1. Its function is as follows. Succinyl-CoA synthetase functions in the citric acid cycle (TCA), coupling the hydrolysis of succinyl-CoA to the synthesis of either ATP or GTP and thus represents the only step of substrate-level phosphorylation in the TCA. The beta subunit provides nucleotide specificity of the enzyme and binds the substrate succinate, while the binding sites for coenzyme A and phosphate are found in the alpha subunit. The polypeptide is Succinate--CoA ligase [ADP-forming] subunit beta (Coxiella burnetii (strain CbuG_Q212) (Coxiella burnetii (strain Q212))).